The sequence spans 331 residues: Centriolar satellite-associated tubulin polyglutamylase complex regulator 1 (331 aa).

The required for interaction with PCM1 stretch occupies residues 1–111 (MLSPERLALP…HCLLQLLCPD (111 aa)). Residues 1-225 (MLSPERLALP…SCPPPALVKE (225 aa)) form a required for interaction with TPGS1, LRRC49, and TTLL1 region. Residues 112-331 (FPLELTQKAA…STEETDESET (220 aa)) form a required for interaction with TPGS2 region. The disordered stretch occupies residues 292 to 331 (SCLPSRTPPRVGSPWKPLHRSRKLDAESDGSTEETDESET). Acidic residues predominate over residues 318–331 (ESDGSTEETDESET). Ser319 carries the phosphoserine modification.

It belongs to the CSTPP1 family. As to quaternary structure, interacts with PCM1. Interacts with TTLL1, TPGS1, TPGS2 and LRRC49; the interactions link CSTPP1 to the complex TPGC. Binds to alpha-tubulin.

Its subcellular location is the cytoplasm. It is found in the cytoskeleton. The protein localises to the microtubule organizing center. The protein resides in the centrosome. It localises to the centriolar satellite. Its function is as follows. Regulator of the tubulin polyglutamylase complex (TPGC) that controls cytoskeletal organization, nuclear shape, and cilium disassembly by balancing microtubule and actin assembly. Regulates the assembly and stability of the TPGC and thereby modulates polyglutamylation of the microtubule, which antagonizes MAP4 binding. The polypeptide is Centriolar satellite-associated tubulin polyglutamylase complex regulator 1 (Cstpp1) (Rattus norvegicus (Rat)).